We begin with the raw amino-acid sequence, 325 residues long: Undecaprenyl-phosphate 4-deoxy-4-formamido-L-arabinose transferase (325 aa).

A run of 2 helical transmembrane segments spans residues 235-255 (LSVV…LLMV) and 269-291 (VFTL…GLLG).

It belongs to the glycosyltransferase 2 family.

It is found in the cell inner membrane. The enzyme catalyses UDP-4-deoxy-4-formamido-beta-L-arabinose + di-trans,octa-cis-undecaprenyl phosphate = 4-deoxy-4-formamido-alpha-L-arabinopyranosyl di-trans,octa-cis-undecaprenyl phosphate + UDP. The protein operates within glycolipid biosynthesis; 4-amino-4-deoxy-alpha-L-arabinose undecaprenyl phosphate biosynthesis; 4-amino-4-deoxy-alpha-L-arabinose undecaprenyl phosphate from UDP-4-deoxy-4-formamido-beta-L-arabinose and undecaprenyl phosphate: step 1/2. It participates in bacterial outer membrane biogenesis; lipopolysaccharide biosynthesis. Its function is as follows. Catalyzes the transfer of 4-deoxy-4-formamido-L-arabinose from UDP to undecaprenyl phosphate. The modified arabinose is attached to lipid A and is required for resistance to polymyxin and cationic antimicrobial peptides. Essential for virulence in insects. This Photorhabdus laumondii subsp. laumondii (strain DSM 15139 / CIP 105565 / TT01) (Photorhabdus luminescens subsp. laumondii) protein is Undecaprenyl-phosphate 4-deoxy-4-formamido-L-arabinose transferase.